The primary structure comprises 270 residues: Tetraspanin-17 (270 aa).

The Cytoplasmic portion of the chain corresponds to 1–19 (MPGKHQQFQDPEVGCCGKY). Residues 20–40 (FLFGFNIVFWVLGALFLAIGL) form a helical membrane-spanning segment. Residues 41–63 (WAWGEKGVLSNISGLTDLGGLDP) lie on the Extracellular side of the membrane. N-linked (GlcNAc...) asparagine glycosylation is present at Asn-51. The chain crosses the membrane as a helical span at residues 64 to 84 (VWLFVVIGGIMSVLGFAGCIG). Topologically, residues 85–94 (ALRENTFLLK) are cytoplasmic. A helical transmembrane segment spans residues 95–115 (FFSVFLGLIFFLELAAGILAF). The Extracellular segment spans residues 116-234 (VFKDWIRDQL…GQFEKWLQDN (119 aa)). 4 disulfide bridges follow: Cys-155/Cys-223, Cys-156/Cys-188, Cys-172/Cys-182, and Cys-189/Cys-202. N-linked (GlcNAc...) asparagine glycosylation occurs at Asn-171. A helical membrane pass occupies residues 235 to 255 (LIVVAGVLVAIALLQICGICL). Residues 256–270 (AQNLVSDIEAVKANW) lie on the Cytoplasmic side of the membrane.

This sequence belongs to the tetraspanin (TM4SF) family. As to quaternary structure, interacts with ADAM10; the interaction influences ADAM10 substrate specificity, endocytosis and turnover.

Its subcellular location is the cell membrane. Its function is as follows. Part of TspanC8 subgroup, composed of 6 members that interact with the transmembrane metalloprotease ADAM10. This interaction is required for ADAM10 exit from the endoplasmic reticulum and for enzymatic maturation and trafficking to the cell surface as well as substrate specificity. Different TspanC8/ADAM10 complexes have distinct substrates. Seems to regulate VE-cadherin expression in endothelial cells probably through interaction with ADAM10, promoting leukocyte transmigration. This is Tetraspanin-17 (Tspan17) from Rattus norvegicus (Rat).